Here is a 1305-residue protein sequence, read N- to C-terminus: Adenylate cyclase type 9 (1305 aa).

The Cytoplasmic segment spans residues 1–110; it reads MASPVNQQLL…CFPQTQRRFR (110 aa). Low complexity predominate over residues 46–55; it reads ISSSCSSGES. Positions 46–71 are disordered; the sequence is ISSSCSSGESGVKKTGGSGGARRQKK. A helical membrane pass occupies residues 111 to 131; sequence YALMYLSVAGLLWSIYFSVHM. Residues 132–134 are Extracellular-facing; sequence KTK. The helical transmembrane segment at 135–155 threads the bilayer; the sequence is LVSHLVPTLCFLIVCLGFFFF. The Cytoplasmic portion of the chain corresponds to 156-164; sequence TFTKSYARH. Residues 165-185 traverse the membrane as a helical segment; sequence CTAISLLVTLLVFTLTLASQF. Residues 186 to 209 lie on the Extracellular side of the membrane; sequence QVLNPGLGSDSLSNLTSFSATGSS. Residue Asn-199 is glycosylated (N-linked (GlcNAc...) asparagine). Residues 210–229 traverse the membrane as a helical segment; the sequence is SCLSQVGSFSICVEVLLLLY. Residues 230–235 lie on the Cytoplasmic side of the membrane; it reads TVMHLP. The chain crosses the membrane as a helical span at residues 236–253; that stretch reads LYLSACLGVAYSILFETF. At 254–274 the chain is on the extracellular side; it reads GYHFRDESCFVLLVGRMAHWE. The chain crosses the membrane as a helical span at residues 275-295; sequence LLSKALLHVCIHAIGVHLFIM. The Cytoplasmic segment spans residues 296–778; that stretch reads SEVRSRSTFL…VKTFASATFS (483 aa). A disordered region spans residues 343 to 369; it reads QGDDESENSVKRHSASSPKSRKKKSSI. The span at 353-368 shows a compositional bias: basic residues; it reads KRHSASSPKSRKKKSS. Mg(2+)-binding residues include Asp-393, Ile-394, and Asp-437. ATP contacts are provided by residues 393–398, 435–437, and Arg-481; these read DIVGFT and LGD. Composition is skewed to polar residues over residues 607–618 and 670–680; these read SDSHTNCTQPET and ESSTGDTLTNS. The disordered stretch occupies residues 607 to 680; it reads SDSHTNCTQP…SSTGDTLTNS (74 aa). Residues 779-799 traverse the membrane as a helical segment; that stretch reads SLQDVLLNYFIFVLLSVACLL. Residues 800–810 lie on the Extracellular side of the membrane; sequence KPGTNTVSPPT. Residues 811–831 traverse the membrane as a helical segment; the sequence is LALVLLSVCGLLGFLSLLVSV. The Cytoplasmic segment spans residues 832-859; it reads RMAFYLEDMLLCTRRLLEIISGWVPRHF. A helical membrane pass occupies residues 860–880; the sequence is IGTVLVCLPAAVIFSYLSSDF. The Extracellular segment spans residues 881 to 883; it reads YTD. A helical transmembrane segment spans residues 884-904; sequence IHYTMFLCSALLIPMVQYCNF. Over 905-911 the chain is Cytoplasmic; the sequence is CQLSSSA. The helical transmembrane segment at 912 to 932 threads the bilayer; that stretch reads LLLATITGATMLILIYLPLCP. The Extracellular segment spans residues 933-966; sequence QRPPLDPGTDIEANLSTSNSSYETLDNPRTELPF. N-linked (GlcNAc...) asparagine glycans are attached at residues Asn-946 and Asn-951. Residues 967-987 traverse the membrane as a helical segment; that stretch reads TRLGQEIAVAYFLLLLLVWFL. The Cytoplasmic segment spans residues 988-1305; the sequence is NREFDVSYRL…EERGRDGGAR (318 aa). Residues Lys-1099, 1176 to 1178, 1183 to 1187, and Lys-1223 each bind ATP; these read DIW and NIASR. Residues 1261–1305 are disordered; it reads SIGRSPTDEISSLVTGGKGAVELGSGEAERKREKAEERGRDGGAR. Positions 1287 to 1305 are enriched in basic and acidic residues; the sequence is EAERKREKAEERGRDGGAR.

It belongs to the adenylyl cyclase class-4/guanylyl cyclase family. The cofactor is Mg(2+). Mn(2+) is required as a cofactor. In terms of tissue distribution, detected in oocytes.

The protein localises to the cell membrane. The catalysed reaction is ATP = 3',5'-cyclic AMP + diphosphate. In terms of biological role, adenylyl cyclase that catalyzes the formation of the signaling molecule cAMP in response to activation of G protein-coupled receptors. The polypeptide is Adenylate cyclase type 9 (adcy9) (Xenopus laevis (African clawed frog)).